A 426-amino-acid chain; its full sequence is Histidine--tRNA ligase (426 aa).

It belongs to the class-II aminoacyl-tRNA synthetase family. In terms of assembly, homodimer.

It localises to the cytoplasm. It carries out the reaction tRNA(His) + L-histidine + ATP = L-histidyl-tRNA(His) + AMP + diphosphate + H(+). The protein is Histidine--tRNA ligase of Corynebacterium kroppenstedtii (strain DSM 44385 / JCM 11950 / CIP 105744 / CCUG 35717).